Here is a 352-residue protein sequence, read N- to C-terminus: Molybdenum import ATP-binding protein ModC (352 aa).

Residues 1–229 (MLELNFSQTL…SVMNPWLPKE (229 aa)) form the ABC transporter domain. An ATP-binding site is contributed by 31–38 (GVSGAGKT). The Mop domain occupies 289 to 352 (QTSIRNVLRA…AQIKSVSITA (64 aa)).

It belongs to the ABC transporter superfamily. Molybdate importer (TC 3.A.1.8) family. In terms of assembly, the complex is composed of two ATP-binding proteins (ModC), two transmembrane proteins (ModB) and a solute-binding protein (ModA).

The protein localises to the cell inner membrane. It catalyses the reaction molybdate(out) + ATP + H2O = molybdate(in) + ADP + phosphate + H(+). Its function is as follows. Part of the ABC transporter complex ModABC involved in molybdenum import. Responsible for energy coupling to the transport system. This chain is Molybdenum import ATP-binding protein ModC, found in Shigella dysenteriae serotype 1 (strain Sd197).